The sequence spans 302 residues: tRNA dimethylallyltransferase (302 aa).

8–15 contributes to the ATP binding site; sequence GSSGSGKS. Residue 10-15 participates in substrate binding; the sequence is SGSGKS. Positions 33 to 36 are interaction with substrate tRNA; sequence DSLS.

This sequence belongs to the IPP transferase family. As to quaternary structure, monomer. Requires Mg(2+) as cofactor.

The enzyme catalyses adenosine(37) in tRNA + dimethylallyl diphosphate = N(6)-dimethylallyladenosine(37) in tRNA + diphosphate. In terms of biological role, catalyzes the transfer of a dimethylallyl group onto the adenine at position 37 in tRNAs that read codons beginning with uridine, leading to the formation of N6-(dimethylallyl)adenosine (i(6)A). The protein is tRNA dimethylallyltransferase of Helicobacter hepaticus (strain ATCC 51449 / 3B1).